The following is a 141-amino-acid chain: Large ribosomal subunit protein uL23A (141 aa).

2 positions are modified to phosphoserine: S68 and S70.

The protein belongs to the universal ribosomal protein uL23 family. Component of the large ribosomal subunit (LSU). Mature yeast ribosomes consist of a small (40S) and a large (60S) subunit. The 40S small subunit contains 1 molecule of ribosomal RNA (18S rRNA) and at least 33 different proteins. The large 60S subunit contains 3 rRNA molecules (25S, 5.8S and 5S rRNA) and at least 46 different proteins. uL23 is associated with the polypeptide exit tunnel.

It localises to the cytoplasm. Its function is as follows. This protein binds to a specific region on the 26S rRNA. Component of the ribosome, a large ribonucleoprotein complex responsible for the synthesis of proteins in the cell. The small ribosomal subunit (SSU) binds messenger RNAs (mRNAs) and translates the encoded message by selecting cognate aminoacyl-transfer RNA (tRNA) molecules. The large subunit (LSU) contains the ribosomal catalytic site termed the peptidyl transferase center (PTC), which catalyzes the formation of peptide bonds, thereby polymerizing the amino acids delivered by tRNAs into a polypeptide chain. The nascent polypeptides leave the ribosome through a tunnel in the LSU and interact with protein factors that function in enzymatic processing, targeting, and the membrane insertion of nascent chains at the exit of the ribosomal tunnel. uL23 is a major component of the universal docking site for these factors at the polypeptide exit tunnel. This is Large ribosomal subunit protein uL23A (rpl2501) from Schizosaccharomyces pombe (strain 972 / ATCC 24843) (Fission yeast).